Here is a 338-residue protein sequence, read N- to C-terminus: D-erythrose-4-phosphate dehydrogenase (338 aa).

11 to 12 (RI) provides a ligand contact to NAD(+). Substrate-binding positions include 153-155 (SCT), arginine 199, 212-213 (TK), and arginine 235. Cysteine 154 serves as the catalytic Nucleophile. Residue asparagine 317 participates in NAD(+) binding.

The protein belongs to the glyceraldehyde-3-phosphate dehydrogenase family. Epd subfamily. In terms of assembly, homotetramer.

It localises to the cytoplasm. It catalyses the reaction D-erythrose 4-phosphate + NAD(+) + H2O = 4-phospho-D-erythronate + NADH + 2 H(+). Its pathway is cofactor biosynthesis; pyridoxine 5'-phosphate biosynthesis; pyridoxine 5'-phosphate from D-erythrose 4-phosphate: step 1/5. Catalyzes the NAD-dependent conversion of D-erythrose 4-phosphate to 4-phosphoerythronate. This is D-erythrose-4-phosphate dehydrogenase from Shewanella putrefaciens (strain CN-32 / ATCC BAA-453).